Here is a 335-residue protein sequence, read N- to C-terminus: MGRLILEHTLQGHKGRIWGVAWHPKGNVFASCGEDKAIRIWSLTGNTWSTKTILSDGHKRTIREIQWSPCGQYLASASFDATTAIWSKSSGEFECNATLEGHENEVKSVSWSRSGGLLATCSRDKSVWIWEVAGDDEFECAAVLNSHTQDVKRVVWHPTKEILASASYDNTIKMYAEEPIDNDWDCTATLTSHTSTIWGIDFDADGERLVSCSDDTTVKIWRAYHPGNSAGVATPDQQTVWKCVCTLSGQHSRAIYDVSWCKLTGLIATACGDDGIRIFKETSDSKPDEPTFEQLTAEESAHDQDVNSVQWNPVVAGQLISCSDDGTIKIWKVTE.

WD repeat units lie at residues 12-51 (GHKG…WSTK), 57-96 (GHKR…FECN), 101-140 (GHEN…EFEC), 146-185 (SHTQ…NDWD), 192-231 (SHTS…NSAG), 250-289 (QHSR…KPDE), and 301-335 (AHDQ…KVTE).

The protein belongs to the WD repeat CIA1 family.

Its function is as follows. Essential component of the cytosolic iron-sulfur (Fe/S) protein assembly machinery. Required for the maturation of extramitochondrial Fe/S proteins. The sequence is that of Probable cytosolic iron-sulfur protein assembly protein Ciao1 from Drosophila yakuba (Fruit fly).